The following is a 116-amino-acid chain: Large ribosomal subunit protein bL19 (116 aa).

This sequence belongs to the bacterial ribosomal protein bL19 family.

Its function is as follows. This protein is located at the 30S-50S ribosomal subunit interface and may play a role in the structure and function of the aminoacyl-tRNA binding site. This is Large ribosomal subunit protein bL19 from Mannheimia succiniciproducens (strain KCTC 0769BP / MBEL55E).